A 563-amino-acid chain; its full sequence is MSSGSRVRGPNSALTEFLRSQGINASALGRARPPRQSEESAGQSTGTESEVIQTPTSVEENNEDENSMSTTTIEIPVVKRRNLRNQKKKKKTDEEAEDNEDTFSMNSRAGFSYKAREHTGKLDFCAHCNCRFTITPYSKYSNSEKGWLCYPCSRGAEDRSVPELRTRKRKALTRKKVAAATMDEEISVPKLQDLCIRVIAEYINDIEAFGDIGQVNMDKISQIISKNRSLNDTTVKLFLSGGQTELKLYDCSKITADSLFQIAQYCPNLQTLHLTYCGQMQDQVLHFYADHLTELTDVSFQGAFLVSSSEWINFFKKRGSKLISLELTDTARIHVSVINAIVDCCPNLISLNLSRIFYLDDECVRLLAGCRNLVSLKIESPGGIINDGSILDVLNQIGSGLHTLSLSGCTKLTDEVLKQGIGPCCGRLKHLNLSGLELLTDDEASIVFGEWKIQSGLETLSLRRCLSLGDKTVRAVLVNSGHTLRTLDLNGMSFVTDEALQYIVNFPLPMLKALDVSWIRGMNDKLVCDFESKKPTLEKLLVWGDNHVLMPSNRLLLIGREVQ.

The disordered stretch occupies residues 1–101 (MSSGSRVRGP…TDEEAEDNED (101 aa)). Residues 39–59 (ESAGQSTGTESEVIQTPTSVE) show a composition bias toward polar residues. The span at 78 to 90 (VKRRNLRNQKKKK) shows a compositional bias: basic residues.

Belongs to the RAD7 family.

It is found in the nucleus. Functionally, involved in global genome repair (GGR) via nucleotide excision repair (NER), in conjunction with rhp16, after UV irradiation. This Schizosaccharomyces pombe (strain 972 / ATCC 24843) (Fission yeast) protein is DNA repair protein rhp7 (rhp7).